We begin with the raw amino-acid sequence, 114 residues long: Large ribosomal subunit protein bL19 (114 aa).

It belongs to the bacterial ribosomal protein bL19 family.

Functionally, this protein is located at the 30S-50S ribosomal subunit interface and may play a role in the structure and function of the aminoacyl-tRNA binding site. The chain is Large ribosomal subunit protein bL19 from Clostridium acetobutylicum (strain ATCC 824 / DSM 792 / JCM 1419 / IAM 19013 / LMG 5710 / NBRC 13948 / NRRL B-527 / VKM B-1787 / 2291 / W).